Here is a 389-residue protein sequence, read N- to C-terminus: Large envelope protein (389 aa).

Methionine 1 carries the post-translational modification N-acetylmethionine. Glycine 2 carries N-myristoyl glycine; by host lipidation. The tract at residues 2–108 (GQNLSTSNPL…PPLRDTHPQA (107 aa)) is pre-S1. Residues 2-163 (GQNLSTSNPL…FSTTGDPAPN (162 aa)) are pre-S. At 2-170 (GQNLSTSNPL…APNMENITSG (169 aa)) the chain is on the virion surface; in external conformation side. At 2-242 (GQNLSTSNPL…PGYRWMCLRR (241 aa)) the chain is on the intravirion; in internal conformation side. Positions 75–107 (TTLPANPPPASTNRQSGRQPTPLSPPLRDTHPQ) are disordered. Positions 85–95 (STNRQSGRQPT) are enriched in polar residues. The segment at 109–163 (MQWNSTTFHQALQDPRVRGLYFPAGGSSSGTLNPVPNTASHISSVFSTTGDPAPN) is pre-S2. Residues 171–191 (FLGPLLVLQAGFFLLTKILTI) form a helical membrane-spanning segment. Topologically, residues 192–242 (PQSLDSWWTSLNFLGGAPVCLGQNSQSPTSNHSPTSCPPICPGYRWMCLRR) are intravirion; in external conformation. Residues 243–263 (FIIFLFILLLCLIFLLVLLDY) form a helical membrane-spanning segment. Topologically, residues 264–337 (QGMLPVCPLI…WASVRFSWLS (74 aa)) are virion surface. Residue asparagine 309 is glycosylated (N-linked (GlcNAc...) asparagine; by host). Residues 338 to 358 (LLAPFVQWFAGLSPTVWLLAI) traverse the membrane as a helical segment. The Intravirion segment spans residues 359-364 (WMMWYW). Residues 365 to 387 (GPNLYNILSPFIPLLPIFFCLWV) traverse the membrane as a helical segment. Residues 388-389 (YI) lie on the Virion surface side of the membrane.

Belongs to the orthohepadnavirus major surface antigen family. In its internal form (Li-HBsAg), interacts with the capsid protein and with the isoform S. Interacts with host chaperone CANX. As to quaternary structure, associates with host chaperone CANX through its pre-S2 N glycan; this association may be essential for isoform M proper secretion. In terms of assembly, interacts with isoform L. Interacts with the antigens of satellite virus HDV (HDVAgs); this interaction is required for encapsidation of HDV genomic RNA. Post-translationally, isoform M is N-terminally acetylated by host at a ratio of 90%, and N-glycosylated by host at the pre-S2 region. Myristoylated.

Its subcellular location is the virion membrane. The large envelope protein exists in two topological conformations, one which is termed 'external' or Le-HBsAg and the other 'internal' or Li-HBsAg. In its external conformation the protein attaches the virus to cell receptors and thereby initiating infection. This interaction determines the species specificity and liver tropism. This attachment induces virion internalization predominantly through caveolin-mediated endocytosis. The large envelope protein also assures fusion between virion membrane and endosomal membrane. In its internal conformation the protein plays a role in virion morphogenesis and mediates the contact with the nucleocapsid like a matrix protein. In terms of biological role, the middle envelope protein plays an important role in the budding of the virion. It is involved in the induction of budding in a nucleocapsid independent way. In this process the majority of envelope proteins bud to form subviral lipoprotein particles of 22 nm of diameter that do not contain a nucleocapsid. The chain is Large envelope protein from Pan troglodytes (Chimpanzee).